We begin with the raw amino-acid sequence, 526 residues long: MSSIKRALISLSDKTGAVEFAQTLHKLGVEILSTGGTAKLLADAGVPVIEVADYTGFPEMLDGRVKTLHPKIHGGILGRRDLDEHVAKMEEHGIGNIDLVCVNLYLFAATIAKPNCTLEDAIENIDIGGPTMVRSAAKNWKHVAIVTDTADFPAIAAELEANNGALSDKTRFNLSRKAFSHTAQYDGMISNYLTSLSDDVLSGTPEIAGFPGRFNQSWIKVQDMRYGENPHQRAAFYRDIDPAAGSLAAYKQLQGKELSYNNIADADAAWEAVKSFDVPACVIVKHANPCGVAIASNTLDAYKLAYATDTTSAFGGIIAFNREVDGATVKQITDNQFMEVLMAPKFTAEALEIAAAKKNVRVLEVPLEAGANRFELKRVGGGLLVQTPDIHRISRADLKVVSKRQPTEQEWNDLLFVWNVAKYVKSNAIVFGKGGQTYGIGAGQMSRVDSTRIAARKAQDAGLDLNGACAASDAFFPFRDGVDVIAEQGIKAIIHPAGSMRDQEVFDAADEHGIAMVVTGIRHFRH.

Positions 1–147 (MSSIKRALIS…KNWKHVAIVT (147 aa)) constitute an MGS-like domain.

This sequence belongs to the PurH family.

The catalysed reaction is (6R)-10-formyltetrahydrofolate + 5-amino-1-(5-phospho-beta-D-ribosyl)imidazole-4-carboxamide = 5-formamido-1-(5-phospho-D-ribosyl)imidazole-4-carboxamide + (6S)-5,6,7,8-tetrahydrofolate. It catalyses the reaction IMP + H2O = 5-formamido-1-(5-phospho-D-ribosyl)imidazole-4-carboxamide. It functions in the pathway purine metabolism; IMP biosynthesis via de novo pathway; 5-formamido-1-(5-phospho-D-ribosyl)imidazole-4-carboxamide from 5-amino-1-(5-phospho-D-ribosyl)imidazole-4-carboxamide (10-formyl THF route): step 1/1. The protein operates within purine metabolism; IMP biosynthesis via de novo pathway; IMP from 5-formamido-1-(5-phospho-D-ribosyl)imidazole-4-carboxamide: step 1/1. This is Bifunctional purine biosynthesis protein PurH from Neisseria meningitidis serogroup B (strain ATCC BAA-335 / MC58).